The primary structure comprises 364 residues: Trans-enoyl reductase sthE (364 aa).

Residue 51–54 (TDYK) coordinates NADP(+). Residue 137–144 (WGTAALAI) coordinates substrate. Residues 172–175 (ATAT), 195–198 (SESS), Y213, and 261–262 (LE) each bind NADP(+). 281-285 (GFEGQ) is a substrate binding site. 351–352 (VK) provides a ligand contact to NADP(+).

The protein belongs to the zinc-containing alcohol dehydrogenase family. As to quaternary structure, monomer.

It carries out the reaction 7 malonyl-CoA + acetyl-CoA + 10 AH2 + 5 S-adenosyl-L-methionine + 2 H(+) = dehydroprobetaenone I + 10 A + 5 S-adenosyl-L-homocysteine + 7 CO2 + 8 CoA + 6 H2O. It participates in mycotoxin biosynthesis. Trans-enoyl reductase; part of the gene cluster that mediates the biosynthesis of the phytotoxin stemphyloxin II. The first step of the pathway is the synthesis of dehydroprobetaenone I by the polyketide synthase sthA and the enoyl reductase sthE via condensation of one acetyl-CoA starter unit with 7 malonyl-CoA units and 5 methylations. The C-terminal reductase (R) domain of sthA catalyzes the reductive release of the polyketide chain. Because sthA lacks a designated enoylreductase (ER) domain, the required activity is provided the enoyl reductase sthE. The short-chain dehydrogenase/reductase sthC then catalyzes reduction of dehydroprobetaenone I to probetaenone I. The cytochrome P450 monooxygenase sthF catalyzes successive epoxidation, oxidation (resulting from epoxide opening) and hydroxylation to install a tertiary alcohol in the decaline ring to yield betaenone C from dehydroprobetaenone I and betaenone B from probetaenone I. The FAD-linked oxidoreductase sthB is responsible for the conversion of betaenone C to betaenone A via an intramolecular aldol reaction between C-1 and C-17 to form the bridged tricyclic system in betaenone A. Finally, the cytochrome P450 monooxygenase sthD catalyzes the hydroxylation of C-15 to afford the final metabolite stemphyloxin II. The chain is Trans-enoyl reductase sthE from Phaeosphaeria nodorum (strain SN15 / ATCC MYA-4574 / FGSC 10173) (Glume blotch fungus).